The following is a 341-amino-acid chain: Tetraacyldisaccharide 4'-kinase (341 aa).

54–61 is an ATP binding site; sequence TVGGAGKT.

This sequence belongs to the LpxK family.

The catalysed reaction is a lipid A disaccharide + ATP = a lipid IVA + ADP + H(+). It participates in glycolipid biosynthesis; lipid IV(A) biosynthesis; lipid IV(A) from (3R)-3-hydroxytetradecanoyl-[acyl-carrier-protein] and UDP-N-acetyl-alpha-D-glucosamine: step 6/6. Functionally, transfers the gamma-phosphate of ATP to the 4'-position of a tetraacyldisaccharide 1-phosphate intermediate (termed DS-1-P) to form tetraacyldisaccharide 1,4'-bis-phosphate (lipid IVA). The polypeptide is Tetraacyldisaccharide 4'-kinase (Brucella melitensis biotype 2 (strain ATCC 23457)).